The primary structure comprises 157 residues: Transmembrane protein 50A (157 aa).

Ser2 bears the N-acetylserine mark. The residue at position 2 (Ser2) is a Phosphoserine. 4 consecutive transmembrane segments (helical) span residues 26–46, 58–78, 95–115, and 126–146; these read IAAGVLFFTGWWIIIDAAVMY, TCGVIATIAFLMINAVSNGQV, IWLFIGFMLAFGSLIASMWIL, and VVYPGIAVFFQNAFIFFGGLV.

Belongs to the UPF0220 family.

The protein resides in the membrane. This Mus musculus (Mouse) protein is Transmembrane protein 50A (Tmem50a).